A 2717-amino-acid polypeptide reads, in one-letter code: Naringenin synthase (2717 aa).

Residues 13 to 422 (HHAVESRDKV…VGRKKELIIR (410 aa)) are adenylation (A) domain. The Carrier 1 domain maps to 531-617 (AAVEALVLAE…AVRDYLFNRL (87 aa)). Ser-576 is subject to O-(pantetheine 4'-phosphoryl)serine. One can recognise a Ketosynthase family 3 (KS3) domain in the interval 638–1066 (AEPIAIISMA…GTNAHIILEQ (429 aa)). Catalysis depends on for beta-ketoacyl synthase activity residues Cys-810, His-945, and His-988. The 259-residue stretch at 1204-1462 (PIFSRAFKEA…GPSAVLSPHV (259 aa)) folds into the Malonyl-CoA:ACP transacylase (MAT) domain. The segment at 1549–1688 (HGVLYRTTSI…GTLKLISLPP (140 aa)) is N-terminal hotdog fold. The region spanning 1549–1847 (HGVLYRTTSI…LRAVQPPVVE (299 aa)) is the PKS/mFAS DH domain. Positions 1561-1842 (TNDIICAGFV…ISEVMLRAVQ (282 aa)) are dehydratase (DH) domain. The active-site Proton acceptor; for dehydratase activity is His-1581. Positions 1703-1847 (NSEVDVSKAY…LRAVQPPVVE (145 aa)) are C-terminal hotdog fold. Residue Asp-1764 is the Proton donor; for dehydratase activity of the active site. The region spanning 2008-2186 (GTVLITGGTG…AVSLAWGPWA (179 aa)) is the Ketoreductase (KR) domain. The region spanning 2277-2354 (SRSDTLLGLV…ALVQYLLDRI (78 aa)) is the Carrier 2 domain. Ser-2313 carries the O-(pantetheine 4'-phosphoryl)serine modification. Positions 2361–2373 (EIELDQDVAEEET) are enriched in acidic residues. Residues 2361–2412 (EIELDQDVAEEETVSGTNGHQNGHQNGTQNGHSNGHANGASTNGDATDGIDP) are disordered. Positions 2375–2396 (SGTNGHQNGHQNGTQNGHSNGH) are enriched in low complexity. The segment at 2497–2711 (SLSVYSAVAA…AIAVEIEHWA (215 aa)) is thioester reductase (TE) domain.

The protein in the N-terminal section; belongs to the NRP synthetase family. Pantetheine 4'-phosphate serves as cofactor.

In terms of biological role, PKS-NRPS hybrid synthetase that, alone, is sufficient to produce naringenin chalcone, the direct precursor of naringenin, by using p-coumaric acid (p-CA) or p-hydroxybenzoic acid (p-HBA) with the involvement of malonyl-CoA molecules. The adenylation (A) domain activates p-CA or p-HBA as adenylates, which are transferred to the thiol group of the pantetheinyl residue of the T domain, and further transferred to the adjacent PKS portion of fnsA. Besides p-CA and p-HBA, the A domain is also able to activate other substrates such as cinnamic acid and salicyclic acid. Within the PKS portion of fnsA, p-CA and p-HBA act as starter units for respectively three or four malonyl-CoA molecules for elongation by the AT and KS domains of fnsA. Afterwards, naringenin chalcone is cyclized through Claisen condensation and thereby released either spontaneously or catalyzed by the TE domain. Finally, naringenin chalcone is converted to naringenin spontaneously or by a chalcone isomerase. In Pestalotiopsis fici (strain W106-1 / CGMCC3.15140), this protein is Naringenin synthase.